The chain runs to 881 residues: Mechanosensitive ion channel protein 5 (881 aa).

Composition is skewed to basic and acidic residues over residues 1-12 (MAAVDSTDRRDF) and 48-59 (DGEKGKNDKKGD). A disordered region spans residues 1–248 (MAAVDSTDRR…RNGFEEEEEE (248 aa)). The span at 115–145 (ELQSNTPPRPATASNTPRRGLTTISESSSPV) shows a compositional bias: polar residues. Residues 169–179 (EEGRNRDEAEV) show a composition bias toward basic and acidic residues. Position 231 is a phosphoserine (Ser-231). A run of 6 helical transmembrane segments spans residues 265–285 (LSFWVFLEWISLVLIVTSLVC), 309–329 (VLVLICGRLVSSWIVRIIVFL), 349–369 (KSVQNCLWLGLVLLAWHFLFD), 387–407 (VLVCLLVALIIWLVKTILVKV), 642–662 (IINVVIGIIIIIIWLLILGIA), and 677–697 (VAFVFGNSCKTIFEAIIFLFV). The disordered stretch occupies residues 861-881 (PTANPTSSDRIPPSWMQQRGP). Positions 864 to 881 (NPTSSDRIPPSWMQQRGP) are enriched in polar residues.

Belongs to the MscS (TC 1.A.23) family.

It localises to the membrane. In terms of biological role, mechanosensitive channel that opens in response to stretch forces in the membrane lipid bilayer. This is Mechanosensitive ion channel protein 5 (MSL5) from Arabidopsis thaliana (Mouse-ear cress).